Here is a 516-residue protein sequence, read N- to C-terminus: DNA topoisomerase large subunit (516 aa).

128–136 contacts ATP; it reads VTGGMNGVG. Residues 369–400 mediate DNA binding; it reads AALARKLAAEKAAETKAAKKASKAKVHKHIKA.

The protein belongs to the type II topoisomerase family. As to quaternary structure, part of the DNA topoisomerase complex made of gp39, gp52 and gp60. Mg(2+) is required as a cofactor.

The catalysed reaction is ATP-dependent breakage, passage and rejoining of double-stranded DNA.. In terms of biological role, large subunit of the DNA topoisomerase that untwists superhelical DNA. Controls of topological states of double-stranded DNA by transient breakage and subsequent rejoining of DNA strands. The protein is DNA topoisomerase large subunit (39) of Escherichia coli (Bacteriophage T4).